Consider the following 556-residue polypeptide: 2-succinyl-5-enolpyruvyl-6-hydroxy-3-cyclohexene-1-carboxylate synthase (556 aa).

This sequence belongs to the TPP enzyme family. MenD subfamily. Homodimer. The cofactor is Mg(2+). Requires Mn(2+) as cofactor. Thiamine diphosphate serves as cofactor.

It catalyses the reaction isochorismate + 2-oxoglutarate + H(+) = 5-enolpyruvoyl-6-hydroxy-2-succinyl-cyclohex-3-ene-1-carboxylate + CO2. It functions in the pathway quinol/quinone metabolism; 1,4-dihydroxy-2-naphthoate biosynthesis; 1,4-dihydroxy-2-naphthoate from chorismate: step 2/7. It participates in quinol/quinone metabolism; menaquinone biosynthesis. Catalyzes the thiamine diphosphate-dependent decarboxylation of 2-oxoglutarate and the subsequent addition of the resulting succinic semialdehyde-thiamine pyrophosphate anion to isochorismate to yield 2-succinyl-5-enolpyruvyl-6-hydroxy-3-cyclohexene-1-carboxylate (SEPHCHC). In Escherichia coli O17:K52:H18 (strain UMN026 / ExPEC), this protein is 2-succinyl-5-enolpyruvyl-6-hydroxy-3-cyclohexene-1-carboxylate synthase.